Here is a 785-residue protein sequence, read N- to C-terminus: Ubiquitin carboxyl-terminal hydrolase 10 (785 aa).

2 stretches are compositionally biased toward polar residues: residues 113–122 (LTLDSGSNAE) and 262–277 (DTTE…TLES). Disordered stretches follow at residues 113 to 145 (LTLD…PPGY) and 262 to 314 (DTTE…ATAT). Positions 290 to 304 (HTVESTDSDQAKPEE) are enriched in basic and acidic residues. Low complexity predominate over residues 305 to 314 (ASPTTEATAT). Residues 401 to 782 (RGLINKGNWC…TAYLLYYRRV (382 aa)) form the USP domain. The active-site Nucleophile is the Cys-410. A disordered region spans residues 537–581 (EKLSVSNGPEVQTVREEEEQDEQGEGSEDEWEQVGPRNKSSVTRQ). Positions 552–568 (EEEEQDEQGEGSEDEWE) are enriched in acidic residues. Catalysis depends on His-736, which acts as the Proton acceptor.

Belongs to the peptidase C19 family. USP10 subfamily.

The protein localises to the cytoplasm. The protein resides in the nucleus. It carries out the reaction Thiol-dependent hydrolysis of ester, thioester, amide, peptide and isopeptide bonds formed by the C-terminal Gly of ubiquitin (a 76-residue protein attached to proteins as an intracellular targeting signal).. Functionally, hydrolase that can remove conjugated ubiquitin from target proteins such as p53/TP53, RPS2/us5, RPS3/us3, RPS10/eS10, BECN1, SNX3 and CFTR. Acts as an essential regulator of p53/TP53 stability: in unstressed cells, specifically deubiquitinates p53/TP53 in the cytoplasm, leading to counteracts MDM2 action and stabilize p53/TP53. Following DNA damage, translocates to the nucleus and deubiquitinates p53/TP53, leading to regulate the p53/TP53-dependent DNA damage response. Component of a regulatory loop that controls autophagy and p53/TP53 levels. Plays a key role in 40S ribosome subunit recycling when a ribosome has stalled during translation: acts both by inhibiting formation of stress granules, which store stalled translation pre-initiation complexes, and mediating deubiquitination of 40S ribosome subunits. Deubiquitinates CFTR in early endosomes, enhancing its endocytic recycling. The chain is Ubiquitin carboxyl-terminal hydrolase 10 (USP10) from Gallus gallus (Chicken).